Consider the following 234-residue polypeptide: ATP-dependent dethiobiotin synthetase BioD (234 aa).

An ATP-binding site is contributed by 12-17 (DVGKTF). Thr-16 contributes to the Mg(2+) binding site. Lys-37 is a catalytic residue. Residue Thr-41 coordinates substrate. Residues Asp-54 and 115 to 118 (EGAG) contribute to the ATP site. 2 residues coordinate Mg(2+): Asp-54 and Glu-115.

Belongs to the dethiobiotin synthetase family. In terms of assembly, homodimer. Requires Mg(2+) as cofactor.

It is found in the cytoplasm. It catalyses the reaction (7R,8S)-7,8-diammoniononanoate + CO2 + ATP = (4R,5S)-dethiobiotin + ADP + phosphate + 3 H(+). Its pathway is cofactor biosynthesis; biotin biosynthesis; biotin from 7,8-diaminononanoate: step 1/2. Functionally, catalyzes a mechanistically unusual reaction, the ATP-dependent insertion of CO2 between the N7 and N8 nitrogen atoms of 7,8-diaminopelargonic acid (DAPA, also called 7,8-diammoniononanoate) to form a ureido ring. The sequence is that of ATP-dependent dethiobiotin synthetase BioD from Lysinibacillus sphaericus (Bacillus sphaericus).